The chain runs to 547 residues: CAP-Gly domain-containing linker protein 3 (547 aa).

Residues 1 to 49 form a disordered region; the sequence is MTKTDPAPMAPPPRGEEEEEEEEDEPVPEAPSPTQERRQKPVVHPSAPA. Over residues 16–27 the composition is skewed to acidic residues; it reads EEEEEEEEDEPV. ANK repeat units follow at residues 117-155, 160-189, and 197-226; these read TDMTLLHYACKAGAHGVGDPAAAVRLSQQLLALGADVTL, TNMNALHYAAYFDVPDLVRVLLKGARPRVV, and NHGSALHIAASSLCLGAAKCLLEHGANPAL. In terms of domain architecture, CAP-Gly 1 spans 314–356; that stretch reads GTTEFASGQWVGVELDEPEGKNDGSVGGVRYFICPPKQGLFAS. The interval 365 to 413 is disordered; it reads DAPPSSVTSTPRTPRMDFSRVTGKGRREHKGKKKTPSSPSLGSLQQRDR. Low complexity predominate over residues 367–377; sequence PPSSVTSTPRT. The residue at position 374 (T374) is a Phosphothreonine. The segment covering 387–399 has biased composition (basic residues); it reads GKGRREHKGKKKT. Positions 400-409 are enriched in polar residues; sequence PSSPSLGSLQ. At S401 the chain carries Phosphoserine. The CAP-Gly 2 domain maps to 436–478; it reads GKTDFAPGYWYGIELDQPTGKHDGSVFGVRYFTCPPRHGVFAP. Residues 488–547 are goLD; that stretch reads STDSPGDSVGAKKVHQVTMTQPKRTFTTVRTPKDIASENSISRLLFCCWFPWMLRAEMQS. 2 S-palmitoyl cysteine lipidation sites follow: C534 and C535.

As to quaternary structure, homodimer. Interacts with AKT1 and AKT2; when AKT1 and AKT2 are phosphorylated and activated, affinity is higher for AKT2. Interacts with ZDHHC13 (via ANK repeats). Interacts with ZDHHC17 (via ANK repeats). In terms of processing, palmitoylation by ZDHHC17 regulates association with the plasma membrane.

It localises to the cell membrane. It is found in the cytoplasm. Its subcellular location is the golgi apparatus. The protein resides in the golgi stack. Functionally, functions as a cytoplasmic linker protein. Involved in TGN-endosome dynamics. May modulate the cellular compartmentalization of AKT kinase family and promote its cell membrane localization, thereby playing a role in glucose transport in adipocytes. The sequence is that of CAP-Gly domain-containing linker protein 3 (CLIP3) from Pongo abelii (Sumatran orangutan).